A 217-amino-acid polypeptide reads, in one-letter code: N-(5'-phosphoribosyl)anthranilate isomerase (217 aa).

This sequence belongs to the TrpF family.

It carries out the reaction N-(5-phospho-beta-D-ribosyl)anthranilate = 1-(2-carboxyphenylamino)-1-deoxy-D-ribulose 5-phosphate. Its pathway is amino-acid biosynthesis; L-tryptophan biosynthesis; L-tryptophan from chorismate: step 3/5. The protein is N-(5'-phosphoribosyl)anthranilate isomerase of Acaryochloris marina (strain MBIC 11017).